Consider the following 369-residue polypeptide: Peptide chain release factor 2 (369 aa).

N5-methylglutamine is present on glutamine 252.

It belongs to the prokaryotic/mitochondrial release factor family. Methylated by PrmC. Methylation increases the termination efficiency of RF2.

The protein localises to the cytoplasm. Functionally, peptide chain release factor 2 directs the termination of translation in response to the peptide chain termination codons UGA and UAA. This chain is Peptide chain release factor 2, found in Staphylococcus aureus (strain MRSA252).